Reading from the N-terminus, the 199-residue chain is uncharacterized protein (199 aa).

Residues 72–116 are a coiled coil; sequence EIYSEIENEESDIEEMSEEMKAFFAKTQEHRQKLKEQRAAEKRKE. Residues 98 to 117 show a composition bias toward basic and acidic residues; sequence TQEHRQKLKEQRAAEKRKEG. The disordered stretch occupies residues 98–127; the sequence is TQEHRQKLKEQRAAEKRKEGQSSSKSQEEY.

This is an uncharacterized protein from Caenorhabditis elegans.